Reading from the N-terminus, the 124-residue chain is Large ribosomal subunit protein bL12 (124 aa).

It belongs to the bacterial ribosomal protein bL12 family. In terms of assembly, homodimer. Part of the ribosomal stalk of the 50S ribosomal subunit. Forms a multimeric L10(L12)X complex, where L10 forms an elongated spine to which 2 to 4 L12 dimers bind in a sequential fashion. Binds GTP-bound translation factors.

Functionally, forms part of the ribosomal stalk which helps the ribosome interact with GTP-bound translation factors. Is thus essential for accurate translation. In Burkholderia thailandensis (strain ATCC 700388 / DSM 13276 / CCUG 48851 / CIP 106301 / E264), this protein is Large ribosomal subunit protein bL12.